Reading from the N-terminus, the 185-residue chain is Ribosome-recycling factor (185 aa).

Belongs to the RRF family.

The protein localises to the cytoplasm. Functionally, responsible for the release of ribosomes from messenger RNA at the termination of protein biosynthesis. May increase the efficiency of translation by recycling ribosomes from one round of translation to another. The polypeptide is Ribosome-recycling factor (Pseudomonas aeruginosa (strain LESB58)).